Reading from the N-terminus, the 1253-residue chain is Methionine synthase (1253 aa).

A Hcy-binding domain is found at 6–326; the sequence is QDEIEAILRK…DHIREIAEAV (321 aa). Zn(2+) contacts are provided by Cys-248, Cys-311, and Cys-312. In terms of domain architecture, Pterin-binding spans 359–620; it reads FVNIGERCNV…IHKDLLQLCE (262 aa). (6S)-5,6,7,8-tetrahydrofolate contacts are provided by residues 370 to 372, Asp-437, Asn-458, Asp-525, Asn-567, Arg-573, and Arg-579; that span reads GSR. In terms of domain architecture, B12-binding N-terminal spans 650–747; the sequence is QTDEWRNGSI…FMEKEREEAR (98 aa). Residues Glu-697, 770-774, His-773, Ser-818, Thr-822, and Ala-874 contribute to the methylcob(III)alamin site; that span reads GDVHD. One can recognise a B12-binding domain in the interval 760 to 895; it reads QGTIVLATVK…DENLRDDYFE (136 aa). The AdoMet activation domain maps to 911–1253; that stretch reads SLKERKYVPL…LGPILGYDTD (343 aa). S-adenosyl-L-methionine contacts are provided by residues Asp-962, Arg-1160, and 1215-1216; that span reads YF. Thr-1252 carries the phosphothreonine modification.

This sequence belongs to the vitamin-B12 dependent methionine synthase family. In terms of assembly, monomer. Dimer. Forms a multiprotein complex with MMACHC, MMADHC and MTRR. Requires methylcob(III)alamin as cofactor. It depends on Zn(2+) as a cofactor.

It localises to the cytoplasm. The enzyme catalyses (6S)-5-methyl-5,6,7,8-tetrahydrofolate + L-homocysteine = (6S)-5,6,7,8-tetrahydrofolate + L-methionine. Its pathway is amino-acid biosynthesis; L-methionine biosynthesis via de novo pathway; L-methionine from L-homocysteine (MetH route): step 1/1. Functionally, catalyzes the transfer of a methyl group from methylcob(III)alamin (MeCbl) to homocysteine, yielding enzyme-bound cob(I)alamin and methionine in the cytosol. MeCbl is an active form of cobalamin (vitamin B12) used as a cofactor for methionine biosynthesis. Cob(I)alamin form is regenerated to MeCbl by a transfer of a methyl group from 5-methyltetrahydrofolate. The processing of cobalamin in the cytosol occurs in a multiprotein complex composed of at least MMACHC, MMADHC, MTRR (methionine synthase reductase) and MTR which may contribute to shuttle safely and efficiently cobalamin towards MTR in order to produce methionine. In Mus musculus (Mouse), this protein is Methionine synthase.